The chain runs to 149 residues: Large ribosomal subunit protein uL15 (149 aa).

The tract at residues 1–53 is disordered; it reads MRLHTLQPAPGAKSTRKRVGRGTSSGHGKTSGFGHKGQKARSGRVGKRGFEGG. Over residues 23-35 the composition is skewed to gly residues; that stretch reads TSSGHGKTSGFGH. Residues 36 to 47 are compositionally biased toward basic residues; that stretch reads KGQKARSGRVGK.

The protein belongs to the universal ribosomal protein uL15 family. As to quaternary structure, part of the 50S ribosomal subunit.

Its function is as follows. Binds to the 23S rRNA. The polypeptide is Large ribosomal subunit protein uL15 (Coprothermobacter proteolyticus (strain ATCC 35245 / DSM 5265 / OCM 4 / BT)).